Here is a 338-residue protein sequence, read N- to C-terminus: DNA-directed RNA polymerase subunit alpha (338 aa).

The alpha N-terminal domain (alpha-NTD) stretch occupies residues Met-1 to Asn-225. The interval Tyr-242–Glu-338 is alpha C-terminal domain (alpha-CTD). A disordered region spans residues Phe-314–Glu-338.

This sequence belongs to the RNA polymerase alpha chain family. In terms of assembly, homodimer. The RNAP catalytic core consists of 2 alpha, 1 beta, 1 beta' and 1 omega subunit. When a sigma factor is associated with the core the holoenzyme is formed, which can initiate transcription.

The catalysed reaction is RNA(n) + a ribonucleoside 5'-triphosphate = RNA(n+1) + diphosphate. DNA-dependent RNA polymerase catalyzes the transcription of DNA into RNA using the four ribonucleoside triphosphates as substrates. In Corynebacterium efficiens (strain DSM 44549 / YS-314 / AJ 12310 / JCM 11189 / NBRC 100395), this protein is DNA-directed RNA polymerase subunit alpha.